Reading from the N-terminus, the 354-residue chain is Clavesin-1 (354 aa).

Residues 118-279 (IKRALIDGFP…EFGGTLPPYD (162 aa)) enclose the CRAL-TRIO domain. The tract at residues 317-354 (RECSPKPMKRSQSVVEAGTLKHEEKGENENTQPLLALD) is disordered. The segment covering 335–344 (TLKHEEKGEN) has biased composition (basic and acidic residues). Over residues 345 to 354 (ENTQPLLALD) the composition is skewed to polar residues.

As to quaternary structure, forms a complex with clathrin heavy chain and gamma-adaptin.

The protein localises to the golgi apparatus. It localises to the trans-Golgi network membrane. Its subcellular location is the early endosome membrane. It is found in the cytoplasmic vesicle. The protein resides in the clathrin-coated vesicle. Required for normal morphology of late endosomes and/or lysosomes in neurons. Binds phosphatidylinositol 3,5-bisphosphate (PtdIns(3,5)P2). The sequence is that of Clavesin-1 (Clvs1) from Mus musculus (Mouse).